Here is a 254-residue protein sequence, read N- to C-terminus: tRNA (guanine-N(1)-)-methyltransferase (254 aa).

S-adenosyl-L-methionine is bound by residues Gly-113 and 133-138 (LGDFVL).

It belongs to the RNA methyltransferase TrmD family. Homodimer.

It is found in the cytoplasm. The enzyme catalyses guanosine(37) in tRNA + S-adenosyl-L-methionine = N(1)-methylguanosine(37) in tRNA + S-adenosyl-L-homocysteine + H(+). Functionally, specifically methylates guanosine-37 in various tRNAs. This Herpetosiphon aurantiacus (strain ATCC 23779 / DSM 785 / 114-95) protein is tRNA (guanine-N(1)-)-methyltransferase.